A 373-amino-acid chain; its full sequence is tRNA-specific 2-thiouridylase MnmA (373 aa).

ATP-binding positions include 12-19 (GMSGGVDS) and Met38. The tract at residues 98–100 (NPD) is interaction with target base in tRNA. Cys103 functions as the Nucleophile in the catalytic mechanism. Cys103 and Cys200 are oxidised to a cystine. Gly127 provides a ligand contact to ATP. An interaction with tRNA region spans residues 150-152 (KDQ). The active-site Cysteine persulfide intermediate is the Cys200. The tract at residues 312–313 (RY) is interaction with tRNA.

Belongs to the MnmA/TRMU family.

The protein resides in the cytoplasm. The enzyme catalyses S-sulfanyl-L-cysteinyl-[protein] + uridine(34) in tRNA + AH2 + ATP = 2-thiouridine(34) in tRNA + L-cysteinyl-[protein] + A + AMP + diphosphate + H(+). Its function is as follows. Catalyzes the 2-thiolation of uridine at the wobble position (U34) of tRNA, leading to the formation of s(2)U34. The sequence is that of tRNA-specific 2-thiouridylase MnmA from Streptococcus pneumoniae (strain ATCC 700669 / Spain 23F-1).